The sequence spans 506 residues: MVVREYNEELKYIEKISPNSYLIKKGFQPNMNVEGIFYANSKLERLMFDELRNSCRPGMTGGFLPGVKQIANVAALPGIVGRSVGLPDIHSGYGFAIGNMAAFDMSNPVSIVSPGGVGFDINCGVRLLRTNLFEKDVKPVQEQLAQSLFDHIPVGVGSKGIIPMNAHDLEEALEMGMDWSLREGYVWAEDKEHCEEYGRMLNADPSKVSMRAKKRGLPQLGTLGAGNHYAEIQVVEEIYDKFAASKMGIEELGQICVMIHSGSRGFGHQVATDALVEMEKAMKRDKIETNDRQLACARINSVEGQNYLKAMAAAANFAWVNRSSMTFLTRQAFAKQFNTTPDDLDMHVIYDVSHNVAKMEEHMVDGRPKQLLVHRKGSTRALPPHHPLIPVDYQLTGQPVLIGGSMGTCSFVLTGTEKGMAATFGSTCHGAGRSLSRAKSRRNLDYKDVLRDLEAKGIAIRVASPKLVQEEAPDSYKDVRDVVQTCHDVGISAKAIKLRPIAVIKG.

Mn(2+) is bound by residues Asp-120, Cys-123, His-228, His-260, and His-354. 227-231 (NHYAE) is a GMP binding site. GMP contacts are provided by residues 354–355 (HN), 403–406 (GGSM), Ser-410, 429–432 (HGAG), and Lys-505. The active-site GMP-histidine intermediate is the His-429.

This sequence belongs to the RtcB family. Catalytic component of the tRNA-splicing ligase complex. Requires Mn(2+) as cofactor.

The enzyme catalyses a 3'-end 3'-phospho-ribonucleotide-RNA + a 5'-end dephospho-ribonucleoside-RNA + GTP = a ribonucleotidyl-ribonucleotide-RNA + GMP + diphosphate. It catalyses the reaction a 3'-end 2',3'-cyclophospho-ribonucleotide-RNA + a 5'-end dephospho-ribonucleoside-RNA + GTP + H2O = a ribonucleotidyl-ribonucleotide-RNA + GMP + diphosphate + H(+). Catalytic subunit of the tRNA-splicing ligase complex that acts by directly joining spliced tRNA halves to mature-sized tRNAs by incorporating the precursor-derived splice junction phosphate into the mature tRNA as a canonical 3',5'-phosphodiester. May act as an RNA ligase with broad substrate specificity, and may function toward other RNAs. This Aedes aegypti (Yellowfever mosquito) protein is RNA-splicing ligase RtcB homolog.